The primary structure comprises 360 residues: Phosphoserine aminotransferase (360 aa).

R41 serves as a coordination point for L-glutamate. The pyridoxal 5'-phosphate site is built by W101, T152, D172, and Q195. K196 carries the post-translational modification N6-(pyridoxal phosphate)lysine. Residue 237-238 (NT) coordinates pyridoxal 5'-phosphate.

This sequence belongs to the class-V pyridoxal-phosphate-dependent aminotransferase family. SerC subfamily. As to quaternary structure, homodimer. The cofactor is pyridoxal 5'-phosphate.

It is found in the cytoplasm. The enzyme catalyses O-phospho-L-serine + 2-oxoglutarate = 3-phosphooxypyruvate + L-glutamate. The catalysed reaction is 4-(phosphooxy)-L-threonine + 2-oxoglutarate = (R)-3-hydroxy-2-oxo-4-phosphooxybutanoate + L-glutamate. The protein operates within amino-acid biosynthesis; L-serine biosynthesis; L-serine from 3-phospho-D-glycerate: step 2/3. It functions in the pathway cofactor biosynthesis; pyridoxine 5'-phosphate biosynthesis; pyridoxine 5'-phosphate from D-erythrose 4-phosphate: step 3/5. Its function is as follows. Catalyzes the reversible conversion of 3-phosphohydroxypyruvate to phosphoserine and of 3-hydroxy-2-oxo-4-phosphonooxybutanoate to phosphohydroxythreonine. The sequence is that of Phosphoserine aminotransferase from Burkholderia multivorans (strain ATCC 17616 / 249).